The sequence spans 485 residues: Glucagon receptor (485 aa).

An N-terminal signal peptide occupies residues 1-26 (MLLTQLHCPYLLLLLVVLSCLPKAPS). Residues 27 to 137 (AQVMDFLFEK…EIEVQKGVAK (111 aa)) lie on the Extracellular side of the membrane. Disulfide bonds link C44–C68, C59–C101, and C82–C122. N-linked (GlcNAc...) asparagine glycans are attached at residues N47, N60, N75, and N79. Residues 138–162 (MYSSYQVMYTVGYSLSLGALLLALV) form a helical membrane-spanning segment. At 163–174 (ILLGLRKLHCTR) the chain is on the cytoplasmic side. The chain crosses the membrane as a helical span at residues 175-199 (NYIHGNLFASFVLKAGSVLVIDWLL). Residues 200–226 (KTRYSQKIGDDLSVSVWLSDGAVAGCR) are Extracellular-facing. A disulfide bridge connects residues C225 and C295. Residues 227 to 250 (VATVIMQYGIIANYCWLLVEGVYL) form a helical membrane-spanning segment. Over 251-264 (YSLLSITTFSEKSF) the chain is Cytoplasmic. Residues 265 to 286 (FSLYLCIGWGSPLLFVIPWVVV) form a helical membrane-spanning segment. At 287-304 (KCLFENVQCWTSNDNMGF) the chain is on the extracellular side. A helical membrane pass occupies residues 305-327 (WWILRIPVLLAILINFFIFVRII). The Cytoplasmic portion of the chain corresponds to 328–351 (HLLVAKLRAHQMHYADYKFRLARS). Residues 351–354 (STLT) are important for allosteric inhibitor binding. The helical transmembrane segment at 352-370 (TLTLIPLLGVHEVVFAFVT) threads the bilayer. Residues 371-382 (DEHAQGTLRSTK) lie on the Extracellular side of the membrane. The chain crosses the membrane as a helical span at residues 383 to 403 (LFFDLFFSSFQGLLVAVLYCF). Over 404–485 (LNKEVQAELL…SLPRLADSPT (82 aa)) the chain is Cytoplasmic. The disordered stretch occupies residues 455 to 485 (MSAGSSSGTGCEPSAKTSLASSLPRLADSPT). Residues 456-475 (SAGSSSGTGCEPSAKTSLAS) show a composition bias toward polar residues. Phosphoserine is present on residues S460 and S476.

It belongs to the G-protein coupled receptor 2 family. Post-translationally, ligand-binding promotes phosphorylation of serine residues in the C-terminal cytoplasmic domain. Phosphorylation is important for receptor endocytosis after ligand-binding.

It localises to the cell membrane. In terms of biological role, G-protein coupled receptor for glucagon that plays a central role in the regulation of blood glucose levels and glucose homeostasis. Regulates the rate of hepatic glucose production by promoting glycogen hydrolysis and gluconeogenesis. Plays an important role in mediating the responses to fasting. Ligand binding causes a conformation change that triggers signaling via guanine nucleotide-binding proteins (G proteins) and modulates the activity of down-stream effectors, such as adenylate cyclase. Promotes activation of adenylate cyclase. Besides, plays a role in signaling via a phosphatidylinositol-calcium second messenger system. The chain is Glucagon receptor (Gcgr) from Rattus norvegicus (Rat).